The chain runs to 118 residues: Basic phospholipase A2 PA-12C (118 aa).

7 disulfides stabilise this stretch: C11–C71, C27–C117, C29–C45, C44–C98, C51–C91, C60–C84, and C78–C89. The Ca(2+) site is built by Y28, G30, and G32. The active site involves H48. D49 contributes to the Ca(2+) binding site. The active site involves D92.

Belongs to the phospholipase A2 family. Group I subfamily. D49 sub-subfamily. The cofactor is Ca(2+). As to expression, expressed by the venom gland.

The protein resides in the secreted. The catalysed reaction is a 1,2-diacyl-sn-glycero-3-phosphocholine + H2O = a 1-acyl-sn-glycero-3-phosphocholine + a fatty acid + H(+). Its function is as follows. PLA2 catalyzes the calcium-dependent hydrolysis of the 2-acyl groups in 3-sn-phosphoglycerides. This chain is Basic phospholipase A2 PA-12C, found in Pseudechis australis (Mulga snake).